A 90-amino-acid polypeptide reads, in one-letter code: Putative membrane protein insertion efficiency factor (90 aa).

This sequence belongs to the UPF0161 family.

It localises to the cell inner membrane. In terms of biological role, could be involved in insertion of integral membrane proteins into the membrane. The protein is Putative membrane protein insertion efficiency factor of Bordetella bronchiseptica (strain ATCC BAA-588 / NCTC 13252 / RB50) (Alcaligenes bronchisepticus).